Consider the following 314-residue polypeptide: Periplasmic [NiFe] hydrogenase small subunit (314 aa).

The tat-type signal signal peptide spans 1 to 49 (MNFSVGLGRDDAEKRLVQNGVSRRDFMKFCATVAAAMGMGPAFAPKVAE). The [4Fe-4S] cluster site is built by Cys-67, Cys-70, Cys-164, Cys-197, His-234, Cys-237, Cys-262, and Cys-268. [3Fe-4S] cluster is bound by residues Cys-277, Cys-295, and Cys-298.

It belongs to the [NiFe]/[NiFeSe] hydrogenase small subunit family. Heterodimer of a large and a small subunit. [4Fe-4S] cluster is required as a cofactor. Requires [3Fe-4S] cluster as cofactor. Post-translationally, predicted to be exported by the Tat system. The position of the signal peptide cleavage has been experimentally proven.

The protein resides in the periplasm. The catalysed reaction is 2 Fe(III)-[cytochrome c3] + H2 = 2 Fe(II)-[cytochrome c3] + 2 H(+). Involved in hydrogen uptake for the anaerobic reduction of sulfate to hydrogen sulfide in an electron transport chain. Cytochrome c3 is the physiological electron acceptor. The polypeptide is Periplasmic [NiFe] hydrogenase small subunit (hydA) (Solidesulfovibrio fructosivorans (Desulfovibrio fructosivorans)).